Here is a 601-residue protein sequence, read N- to C-terminus: UvrABC system protein C (601 aa).

The GIY-YIG domain occupies 15 to 94; that stretch reads LQPGVYLFKN…IKSYKPRYNI (80 aa). The region spanning 202–237 is the UVR domain; sequence QEIVREKEKEMAMAARSLEFEKAARLRDQIQSLRQL.

The protein belongs to the UvrC family. As to quaternary structure, interacts with UvrB in an incision complex.

The protein localises to the cytoplasm. Functionally, the UvrABC repair system catalyzes the recognition and processing of DNA lesions. UvrC both incises the 5' and 3' sides of the lesion. The N-terminal half is responsible for the 3' incision and the C-terminal half is responsible for the 5' incision. The protein is UvrABC system protein C of Syntrophomonas wolfei subsp. wolfei (strain DSM 2245B / Goettingen).